The chain runs to 480 residues: Sensor histidine kinase CusS (480 aa).

Residues 1-15 lie on the Cytoplasmic side of the membrane; the sequence is MVSKPFQRPFSLATR. The chain crosses the membrane as a helical span at residues 16-36; that stretch reads LTFFISLATIAAFFAFAWIMI. The Periplasmic portion of the chain corresponds to 37-186; sequence HSVKVHFAEQ…LHYINDLMNK (150 aa). The helical transmembrane segment at 187-207 threads the bilayer; sequence LIMTASVISILIVFIVLLAVH. The region spanning 208–260 is the HAMP domain; sequence KGHAPIRSVSRQIQNITSKDLDVRLDPQTVPIELEQLVLSFNHMIERIEDVFT. At 208–480 the chain is on the cytoplasmic side; it reads KGHAPIRSVS…GTRFVITLPA (273 aa). The region spanning 268–480 is the Histidine kinase domain; it reads DIAHEIRTPI…GTRFVITLPA (213 aa). At His-271 the chain carries Phosphohistidine; by autocatalysis.

Post-translationally, autophosphorylated.

It is found in the cell inner membrane. It carries out the reaction ATP + protein L-histidine = ADP + protein N-phospho-L-histidine.. Functionally, member of the two-component regulatory system CusS/CusR involved in response to copper and silver. Acts as a copper/silver ion sensor. Activates CusR by phosphorylation. The chain is Sensor histidine kinase CusS (cusS) from Escherichia coli (strain K12).